The primary structure comprises 328 residues: Tryptophan--tRNA ligase (328 aa).

Residues Q11–T13 and G19–N20 contribute to the ATP site. The 'HIGH' region motif lies at P12–N20. Position 135 (D135) interacts with L-tryptophan. ATP-binding positions include G147–D149, I186, and K195–S199. The 'KMSKS' region signature appears at K195–S199.

It belongs to the class-I aminoacyl-tRNA synthetase family. As to quaternary structure, homodimer.

Its subcellular location is the cytoplasm. It catalyses the reaction tRNA(Trp) + L-tryptophan + ATP = L-tryptophyl-tRNA(Trp) + AMP + diphosphate + H(+). In terms of biological role, catalyzes the attachment of tryptophan to tRNA(Trp). This is Tryptophan--tRNA ligase from Wolinella succinogenes (strain ATCC 29543 / DSM 1740 / CCUG 13145 / JCM 31913 / LMG 7466 / NCTC 11488 / FDC 602W) (Vibrio succinogenes).